A 294-amino-acid polypeptide reads, in one-letter code: MFQGSIVALITPFKEGEVDYEALGNLIEFHVDNGTDAILVCGTTGESPTLTFEEHEKVIEFAVKRAAGRIKVIAGTGGNATHEAVHLTAHAKEVGADGALVVVPYYNKPTQRGLYEHFKTVAQEVDIPIIIYNIPSRTCVEISVDTMFKLASECENIVASKESTPNMDRISEIVKRLGESFSVLSGDDSLTLPMMALGAKGVISVANNVMPREVKELIRAALEGDFRRAREIHYYLHDLFKVLFIETNPIPVKTACWMLGMCEKEFRLPLTEMSPENENKLREVLKKYNLPLKN.

Thr44 serves as a coordination point for pyruvate. The active-site Proton donor/acceptor is Tyr132. Lys161 (schiff-base intermediate with substrate) is an active-site residue. Ile203 serves as a coordination point for pyruvate.

This sequence belongs to the DapA family. Homotetramer; dimer of dimers.

It is found in the cytoplasm. The catalysed reaction is L-aspartate 4-semialdehyde + pyruvate = (2S,4S)-4-hydroxy-2,3,4,5-tetrahydrodipicolinate + H2O + H(+). The protein operates within amino-acid biosynthesis; L-lysine biosynthesis via DAP pathway; (S)-tetrahydrodipicolinate from L-aspartate: step 3/4. Its function is as follows. Catalyzes the condensation of (S)-aspartate-beta-semialdehyde [(S)-ASA] and pyruvate to 4-hydroxy-tetrahydrodipicolinate (HTPA). In Aquifex aeolicus (strain VF5), this protein is 4-hydroxy-tetrahydrodipicolinate synthase.